Consider the following 292-residue polypeptide: Cbb3-type cytochrome c oxidase subunit CcoP (292 aa).

Helical transmembrane passes span 11-31 (FGLI…SSLI) and 62-82 (VGWI…FFFG). Cytochrome c domains are found at residues 116–195 (ELVD…MAEI) and 205–288 (QLID…QSLK). Positions 129, 132, 133, 174, 219, 222, 223, and 264 each coordinate heme c.

The protein belongs to the CcoP / FixP family. In terms of assembly, component of the cbb3-type cytochrome c oxidase at least composed of CcoN, CcoO, CcoQ and CcoP. Heme c is required as a cofactor.

It localises to the cell inner membrane. The protein operates within energy metabolism; oxidative phosphorylation. Its function is as follows. C-type cytochrome. Part of the cbb3-type cytochrome c oxidase complex. CcoP subunit is required for transferring electrons from donor cytochrome c via its heme groups to CcoO subunit. From there, electrons are shuttled to the catalytic binuclear center of CcoN subunit where oxygen reduction takes place. The complex also functions as a proton pump. In Helicobacter pylori (Campylobacter pylori), this protein is Cbb3-type cytochrome c oxidase subunit CcoP.